A 155-amino-acid polypeptide reads, in one-letter code: Deoxyuridine 5'-triphosphate nucleotidohydrolase (155 aa).

Substrate contacts are provided by residues 75-77 (RSG), Asn-88, and 92-94 (TVD).

It belongs to the dUTPase family. It depends on Mg(2+) as a cofactor.

It catalyses the reaction dUTP + H2O = dUMP + diphosphate + H(+). It participates in pyrimidine metabolism; dUMP biosynthesis; dUMP from dCTP (dUTP route): step 2/2. Its function is as follows. This enzyme is involved in nucleotide metabolism: it produces dUMP, the immediate precursor of thymidine nucleotides and it decreases the intracellular concentration of dUTP so that uracil cannot be incorporated into DNA. This Caulobacter vibrioides (strain ATCC 19089 / CIP 103742 / CB 15) (Caulobacter crescentus) protein is Deoxyuridine 5'-triphosphate nucleotidohydrolase.